The following is a 153-amino-acid chain: Protein SREK1IP1 (153 aa).

Residues 13-30 (AGCRKCGYPGHLTFECRN) form a CCHC-type zinc finger. The interval 44-153 (VSSTSSEDSD…SPNRSEVTKK (110 aa)) is disordered. Ser52 carries the phosphoserine modification. Basic and acidic residues predominate over residues 66-84 (QEKRINEEEEKKKEKSREK). Residues 85-94 (IKLKKKRKRS) are compositionally biased toward basic residues. Phosphoserine occurs at positions 96 and 97. Basic residues predominate over residues 106–141 (QKKQKYQKKEKKKEKKNKSKKGKHHKKEKKKRKKEK).

In terms of assembly, interacts with SREK1/SFRS12.

Functionally, possible splicing regulator involved in the control of cellular survival. The polypeptide is Protein SREK1IP1 (Srek1ip1) (Rattus norvegicus (Rat)).